The chain runs to 290 residues: Ribosomal RNA small subunit methyltransferase A (290 aa).

Positions 28, 30, 55, 76, 102, and 126 each coordinate S-adenosyl-L-methionine.

It belongs to the class I-like SAM-binding methyltransferase superfamily. rRNA adenine N(6)-methyltransferase family. RsmA subfamily.

Its subcellular location is the cytoplasm. It catalyses the reaction adenosine(1518)/adenosine(1519) in 16S rRNA + 4 S-adenosyl-L-methionine = N(6)-dimethyladenosine(1518)/N(6)-dimethyladenosine(1519) in 16S rRNA + 4 S-adenosyl-L-homocysteine + 4 H(+). Its function is as follows. Specifically dimethylates two adjacent adenosines (A1518 and A1519) in the loop of a conserved hairpin near the 3'-end of 16S rRNA in the 30S particle. May play a critical role in biogenesis of 30S subunits. The protein is Ribosomal RNA small subunit methyltransferase A of Lachnoclostridium phytofermentans (strain ATCC 700394 / DSM 18823 / ISDg) (Clostridium phytofermentans).